Reading from the N-terminus, the 1668-residue chain is Kinesin-like protein KIF21B (1668 aa).

The region spanning 8–371 is the Kinesin motor domain; the sequence is CVKVAVRIRP…LKYANRARNI (364 aa). Position 87 to 94 (87 to 94) interacts with ATP; that stretch reads GQTGAGKT. The stretch at 372–465 forms a coiled coil; sequence KNKVVVNQDK…LMSQEANLLL (94 aa). The interaction with TRIM3 stretch occupies residues 401-1100; it reads MEYKAGKRVI…LQALIYNVQH (700 aa). Disordered regions lie at residues 553–629 and 837–866; these read KKKE…PEEK and RVGLKPPNMDSGAEVSASTTSSEAESGARS. The span at 579-628 shows a compositional bias: acidic residues; the sequence is NSEETDENEAEEEEEERDESGCEEEEGREDEDEDSGSEESLVDSDSDPEE. Ser-580 is modified (phosphoserine). Thr-583 is subject to Phosphothreonine. Residues 847–866 are compositionally biased toward low complexity; it reads SGAEVSASTTSSEAESGARS. Residues 924 to 1019 adopt a coiled-coil conformation; sequence IIDIVMQRMT…TKEELDSTDT (96 aa). Phosphoserine is present on residues Ser-1150, Ser-1168, and Ser-1217. The span at 1199–1219 shows a compositional bias: polar residues; it reads LPTRGSTFPRQSRGATDTSPL. The interval 1199–1253 is disordered; sequence LPTRGSTFPRQSRGATDTSPLTRRKSYDRGQPIRSTDMGFTPPSSPPTRPRNDRN. Thr-1239 bears the Phosphothreonine mark. Ser-1243 carries the post-translational modification Phosphoserine. 7 WD repeats span residues 1308–1345, 1348–1386, 1412–1450, 1453–1495, 1504–1541, 1545–1584, and 1587–1624; these read GHTKPILCLDATDELLFTGSKDRSCKMWNLVTGQEIAA, GHPNNVVSIKYCSHSGLVFSVSSSYIKVWDIRDSAKCIR, QGEHQINQMALSPSGSMLYVASGNAVRIWELNRFQPIGK, GHIG…TGTI, PHYDGIECLAIQGDILFSGSRDNGIKKWDLDQQELIQQ, AHKDWVCALAFVPGRPMLLSACRAGFIKVWNVDNFTPIGE, and GHDSPINAICTNSKHIFTASSDCRVKLWNYVPGLTPCL.

It belongs to the TRAFAC class myosin-kinesin ATPase superfamily. Kinesin family. Interacts with TRIM3; the interaction positively affects motility of KIF21B. Interacts with GABARAP and GABA(A) receptor subunits: GABRG2, GABRA1 and GABRA2. May interact with GABA(A) receptor subunits: GABRB2 and GABRB3. As to expression, expressed in brain (at protein level). Expressed in spleen and at lower levels in testes.

The protein localises to the cytoplasm. It localises to the cytoskeleton. It is found in the cell projection. The protein resides in the dendrite. Its subcellular location is the growth cone. The protein localises to the axon. It localises to the cytoplasmic vesicle. Functionally, plus-end directed microtubule-dependent motor protein which displays processive activity. Is involved in regulation of microtubule dynamics, synapse function and neuronal morphology, including dendritic tree branching and spine formation. Plays a role in lerning and memory. Involved in delivery of gamma-aminobutyric acid (GABA(A)) receptor to cell surface. The polypeptide is Kinesin-like protein KIF21B (Kif21b) (Mus musculus (Mouse)).